Reading from the N-terminus, the 193-residue chain is Interleukin-18 (193 aa).

A propeptide spanning residues 1-36 (MAANLIEDNCINLVKMKFVNNTLYFKAESDEGLESD) is cleaved from the precursor.

This sequence belongs to the IL-1 family. As to quaternary structure, forms a ternary complex with ligand-binding receptor subunit IL18R1 and signaling receptor subunit IL18RAP at the plasma membrane. Mature IL18 first binds to IL18R1 forming a low affinity binary complex, which then interacts with IL18RAP to form a high affinity ternary complex that signals inside the cell. Interacts with cargo receptor TMED10; the interaction mediates the translocation from the cytoplasm into the ERGIC (endoplasmic reticulum-Golgi intermediate compartment) and thereby secretion. The pro-IL-18 precursor is processed by CASP1, CASP4 or CASP5 to yield its mature, active form. The pro-IL-18 precursor features autoinhibitory interactions between the propeptide and the post-cleavage-site region, preventing recognition by the IL18R1 receptor. Processing by CASP1, CASP4 or CASP5 induces conformational changes to generate critical receptor-binding sites. The mature form is then secreted and released in the extracellular milieu by passing through the gasdermin-D (GSDMD) pore. In contrast, cleavage by CASP3 inactivates IL18.

Its subcellular location is the cytoplasm. The protein localises to the cytosol. It localises to the secreted. Functionally, pro-inflammatory cytokine primarily involved in epithelial barrier repair, polarized T-helper 1 (Th1) cell and natural killer (NK) cell immune responses. Upon binding to IL18R1 and IL18RAP, forms a signaling ternary complex which activates NF-kappa-B, triggering synthesis of inflammatory mediators. Synergizes with IL12/interleukin-12 to induce IFNG synthesis from T-helper 1 (Th1) cells and natural killer (NK) cells. Involved in transduction of inflammation downstream of pyroptosis: its mature form is specifically released in the extracellular milieu by passing through the gasdermin-D (GSDMD) pore. The protein is Interleukin-18 (IL18) of Canis lupus familiaris (Dog).